The chain runs to 882 residues: Translation initiation factor IF-2 (882 aa).

Disordered stretches follow at residues 67 to 202 (KTVS…EKAR) and 223 to 278 (ERYG…KHMK). Composition is skewed to basic and acidic residues over residues 95–152 (VKRD…EAKA) and 161–202 (EQPK…EKAR). A compositionally biased stretch (basic residues) spans 251–264 (GRRNRNKTQTKSKR). Residues 265 to 274 (GGKDAREGRE) are compositionally biased toward basic and acidic residues. Residues 382–551 (PRAPVVTIMG…LLQAEVLELK (170 aa)) form the tr-type G domain. The G1 stretch occupies residues 391-398 (GHVDHGKT). 391-398 (GHVDHGKT) serves as a coordination point for GTP. Positions 416–420 (GITQH) are G2. Residues 437–440 (DTPG) form a G3 region. GTP contacts are provided by residues 437 to 441 (DTPGH) and 491 to 494 (NKMD). The tract at residues 491–494 (NKMD) is G4. Residues 527–529 (SAK) form a G5 region.

It belongs to the TRAFAC class translation factor GTPase superfamily. Classic translation factor GTPase family. IF-2 subfamily.

It localises to the cytoplasm. One of the essential components for the initiation of protein synthesis. Protects formylmethionyl-tRNA from spontaneous hydrolysis and promotes its binding to the 30S ribosomal subunits. Also involved in the hydrolysis of GTP during the formation of the 70S ribosomal complex. This chain is Translation initiation factor IF-2, found in Shewanella amazonensis (strain ATCC BAA-1098 / SB2B).